The chain runs to 608 residues: Phosphogluconate dehydratase (608 aa).

Residues cysteine 154 and cysteine 221 each contribute to the [4Fe-4S] cluster site.

Belongs to the IlvD/Edd family. [4Fe-4S] cluster is required as a cofactor.

It catalyses the reaction 6-phospho-D-gluconate = 2-dehydro-3-deoxy-6-phospho-D-gluconate + H2O. It participates in carbohydrate metabolism; Entner-Doudoroff pathway. In terms of biological role, catalyzes the dehydration of 6-phospho-D-gluconate to 2-dehydro-3-deoxy-6-phospho-D-gluconate. This Pseudomonas aeruginosa (strain ATCC 15692 / DSM 22644 / CIP 104116 / JCM 14847 / LMG 12228 / 1C / PRS 101 / PAO1) protein is Phosphogluconate dehydratase.